Here is a 465-residue protein sequence, read N- to C-terminus: tRNA (guanine(37)-N(1))-methyltransferase (465 aa).

S-adenosyl-L-methionine contacts are provided by residues H189, 227–228 (DL), and 255–256 (DA). Positions 283 to 362 (YPKEGVPANE…GPGPPPSKPW (80 aa)) are disordered. The span at 291-320 (NENSSSNGNHNDVREGSQNGANESSVASTT) shows a compositional bias: polar residues. Over residues 343–352 (TKRRNNKRVR) the composition is skewed to basic residues. N371 is an S-adenosyl-L-methionine binding site.

The protein belongs to the class I-like SAM-binding methyltransferase superfamily. TRM5/TYW2 family. In terms of assembly, monomer.

It is found in the mitochondrion matrix. Its subcellular location is the nucleus. The protein localises to the cytoplasm. It carries out the reaction guanosine(37) in tRNA + S-adenosyl-L-methionine = N(1)-methylguanosine(37) in tRNA + S-adenosyl-L-homocysteine + H(+). Specifically methylates the N1 position of guanosine-37 in various cytoplasmic and mitochondrial tRNAs. Methylation is not dependent on the nature of the nucleoside 5' of the target nucleoside. This is the first step in the biosynthesis of wybutosine (yW), a modified base adjacent to the anticodon of tRNAs and required for accurate decoding. This chain is tRNA (guanine(37)-N(1))-methyltransferase, found in Sorghum bicolor (Sorghum).